A 177-amino-acid chain; its full sequence is RNA pyrophosphohydrolase (177 aa).

Positions 6-149 constitute a Nudix hydrolase domain; the sequence is GYRPNVGIVI…KRDVYRRVMK (144 aa). The short motif at 38 to 59 is the Nudix box element; sequence GGINPGESAEQAMYRELFEEVG.

It belongs to the Nudix hydrolase family. RppH subfamily. Requires a divalent metal cation as cofactor.

Its function is as follows. Accelerates the degradation of transcripts by removing pyrophosphate from the 5'-end of triphosphorylated RNA, leading to a more labile monophosphorylated state that can stimulate subsequent ribonuclease cleavage. This chain is RNA pyrophosphohydrolase, found in Cronobacter sakazakii (strain ATCC BAA-894) (Enterobacter sakazakii).